A 285-amino-acid polypeptide reads, in one-letter code: OPEP-3 protein (285 aa).

The sequence is that of OPEP-3 protein (OPEP-3) from Orgyia pseudotsugata multicapsid polyhedrosis virus (OpMNPV).